The chain runs to 157 residues: Putative pre-16S rRNA nuclease (157 aa).

The protein belongs to the YqgF nuclease family.

The protein localises to the cytoplasm. In terms of biological role, could be a nuclease involved in processing of the 5'-end of pre-16S rRNA. The polypeptide is Putative pre-16S rRNA nuclease (Nitrosomonas eutropha (strain DSM 101675 / C91 / Nm57)).